The chain runs to 435 residues: GTPase Der (435 aa).

EngA-type G domains are found at residues 4–167 (GIVA…PSHE) and 175–350 (TRVS…TALD). Residues 10 to 17 (GRPNVGKS), 57 to 61 (DTGGI), 119 to 122 (NKYD), 181 to 188 (GRPNVGKS), 228 to 232 (DTAGI), and 293 to 296 (NKWD) each bind GTP. The KH-like domain maps to 351–435 (KKIKTSVFNE…PMSIIFRERK (85 aa)).

Belongs to the TRAFAC class TrmE-Era-EngA-EngB-Septin-like GTPase superfamily. EngA (Der) GTPase family. In terms of assembly, associates with the 50S ribosomal subunit.

Its function is as follows. GTPase that plays an essential role in the late steps of ribosome biogenesis. This is GTPase Der from Mesoplasma florum (strain ATCC 33453 / NBRC 100688 / NCTC 11704 / L1) (Acholeplasma florum).